Consider the following 265-residue polypeptide: Catechol O-methyltransferase (265 aa).

The Cytoplasmic portion of the chain corresponds to 1 to 2 (ML). A helical; Signal-anchor for type II membrane protein membrane pass occupies residues 3–19 (LAAVSLGLLLLAFLLLL). Residues 20–265 (RHLGWGLVAI…QGPGSSPVKS (246 aa)) are Extracellular-facing. S-adenosyl-L-methionine is bound by residues Val85, Glu107, Ser115, Glu133, Ile134, 160-163 (GASQ), Ser162, and Asp184. Asp184 contacts Mg(2+). A substrate-binding site is contributed by Lys187. 2 residues coordinate Mg(2+): Asp212 and Asn213. Substrate contacts are provided by Asn213 and Glu242. Residues Ser260, Ser261, and Ser265 each carry the phosphoserine modification.

The protein belongs to the class I-like SAM-binding methyltransferase superfamily. Cation-dependent O-methyltransferase family. Mg(2+) is required as a cofactor.

Its subcellular location is the cytoplasm. It is found in the cell membrane. The enzyme catalyses a catechol + S-adenosyl-L-methionine = a guaiacol + S-adenosyl-L-homocysteine + H(+). It catalyses the reaction 2-hydroxyestrone + S-adenosyl-L-methionine = 2-hydroxy-3-methoxy-estrone + S-adenosyl-L-homocysteine + H(+). The catalysed reaction is 4-hydroxyestrone + S-adenosyl-L-methionine = 4-methoxyestrone + S-adenosyl-L-homocysteine + H(+). It carries out the reaction 2-hydroxyestrone + S-adenosyl-L-methionine = 2-methoxyestrone + S-adenosyl-L-homocysteine + H(+). The enzyme catalyses 4-hydroxy-17beta-estradiol + S-adenosyl-L-methionine = 4-methoxy-17beta-estradiol + S-adenosyl-L-homocysteine + H(+). It catalyses the reaction 2-hydroxy-17beta-estradiol + S-adenosyl-L-methionine = 2-hydroxy-3-methoxy-17beta-estradiol + S-adenosyl-L-homocysteine + H(+). The catalysed reaction is 2-hydroxy-17beta-estradiol + S-adenosyl-L-methionine = 2-methoxy-17beta-estradiol + S-adenosyl-L-homocysteine + H(+). In terms of biological role, catalyzes the O-methylation, and thereby the inactivation, of catecholamine neurotransmitters and catechol hormones. Also shortens the biological half-lives of certain neuroactive drugs, like L-DOPA, alpha-methyl DOPA and isoproterenol. In Mus musculus (Mouse), this protein is Catechol O-methyltransferase.